An 83-amino-acid polypeptide reads, in one-letter code: Large ribosomal subunit protein eL31 (83 aa).

The protein belongs to the eukaryotic ribosomal protein eL31 family.

The chain is Large ribosomal subunit protein eL31 from Methanococcus maripaludis (strain DSM 14266 / JCM 13030 / NBRC 101832 / S2 / LL).